The sequence spans 952 residues: MSFALGQRWISDTESDLGLGTVVAVDDRTVSLLFAASEENRLYAKHDAPVTRVMFNKGDTIESHEGWSLDVEDVIEEGGLLTYIGTRVDTDEANVVLRETLLSHQIRFNKPQDKLFAGQIDRMDRFALRFRALQNQYEQHKSPMRGLCGMRAGLIPHQLFIAHEVGRRYAPRVLLADEVGLGKTIEAGMIIHQQVLSGRAERVLIVVPETLQHQWLVEMMRRFNLHFSIFDEERCVEAYADSENPFDTAQFVLCSLDFIRKSKRRFEQVVEADWDLLVVDEAHHLEWNQTKPSREYQVIEAIAEETPGVLLLTATPEQLGHESHFARLRLLDPDRFYDYDAFVEEERQYQPVADAVTALMSGEKLSNDAKNRITELLSEQDVEPLFRIIESSAAEDEQAQARQELVDNLMDRHGTGRVLFRNTRAAIKGFPQRNLNLMPMPLPSQYATSMRVATMMGGRMTDEARAMKMLYPEEIFQEFEGDSATWWQFDPRVNWLLELLKENRNEKVLIIASRASTALQLEQALREREGIRGTVFHEGMSIIERDKAAAYFAQEEGGAQVLICSEIGSEGRNFQFANQLVMFDLPFNPDLLEQRIGRLDRIGQKRDIEIHVPYLQGTSQELLARWFDEGLNAFGETCPTGRAVYDKFADAIIAILATGKSDGLESLIEESATLNKALKSQLEQGRDRLLEVHSNGGDKAKEIAEQIAATDGDTNLVNFALNLFDTIGLNQDDKGENAIVVTPAENMLVSSYPGLPYEGCTITFDRETALSREDMNLISWEHPMIQGGIDLVLTEGVGATAVSLLKNKALPAGTLLLELVYVVDAQAPKQSGIARFLPKTPIRIMMDGKGNDLSAQVEFESFNRQLSPVNRHMASKLVNSVQKEIHGLIDKAEISMEERLESVRTDAEKEMKAALNSELERLQALKAVNPNIRDEELTQIGNSNERTIWLYW.

A Helicase ATP-binding domain is found at 164–334 (EVGRRYAPRV…FARLRLLDPD (171 aa)). Position 177–184 (177–184 (DEVGLGKT)) interacts with ATP. The short motif at 280 to 283 (DEAH) is the DEAH box element. The 177-residue stretch at 492–668 (RVNWLLELLK…GKSDGLESLI (177 aa)) folds into the Helicase C-terminal domain.

The protein belongs to the SNF2/RAD54 helicase family. RapA subfamily. As to quaternary structure, interacts with the RNAP. Has a higher affinity for the core RNAP than for the holoenzyme. Its ATPase activity is stimulated by binding to RNAP.

In terms of biological role, transcription regulator that activates transcription by stimulating RNA polymerase (RNAP) recycling in case of stress conditions such as supercoiled DNA or high salt concentrations. Probably acts by releasing the RNAP, when it is trapped or immobilized on tightly supercoiled DNA. Does not activate transcription on linear DNA. Probably not involved in DNA repair. This chain is RNA polymerase-associated protein RapA, found in Aliivibrio fischeri (strain ATCC 700601 / ES114) (Vibrio fischeri).